Reading from the N-terminus, the 309-residue chain is Ribosomal RNA small subunit methyltransferase H (309 aa).

S-adenosyl-L-methionine is bound by residues 30–32 (GGH), Asp-50, Phe-74, Asp-96, and Gln-103.

It belongs to the methyltransferase superfamily. RsmH family.

It localises to the cytoplasm. The catalysed reaction is cytidine(1402) in 16S rRNA + S-adenosyl-L-methionine = N(4)-methylcytidine(1402) in 16S rRNA + S-adenosyl-L-homocysteine + H(+). In terms of biological role, specifically methylates the N4 position of cytidine in position 1402 (C1402) of 16S rRNA. The protein is Ribosomal RNA small subunit methyltransferase H of Wigglesworthia glossinidia brevipalpis.